The primary structure comprises 352 residues: MAGAITDQLRRYLHGRRRAAAHMGSDYDGLIADLEDFVLGGGKRLRPLFAYWGWHAVASREPDPDVLLLFSALELLHAWALVHDDLIDRSATRRGRPTAQLRYAALHRDRDWRGSPDQFGMSAAILLGDLAQVWADDIVSKVCQSALAPDAQRRVHRVWADIRNEVLGGQYLDIVAEASAAESIESAMNVATLKTACYTVSRPLQLGTAAAADRSDVAAIFEHFGADLGVAFQLRDDVLGVFGDPAVTGKPSGDDLKSGKRTVLVAEAVELADRSDPLAAKLLRTSIGTRLTDAQVRELRTVIEAVGARAAAESRIAALTQRALATLASAPINATAKAGLSELAMMAANRSA.

Lysine 43, arginine 46, and histidine 77 together coordinate isopentenyl diphosphate. Mg(2+) is bound by residues aspartate 84 and aspartate 88. Positions 84-88 match the DDXXD motif motif; that stretch reads DDLID. Arginine 94 provides a ligand contact to isopentenyl diphosphate. A DDXXD motif motif is present at residues 236-240; the sequence is DDVLG.

It belongs to the FPP/GGPP synthase family. The cofactor is Mg(2+).

The enzyme catalyses isopentenyl diphosphate + dimethylallyl diphosphate = (2E)-geranyl diphosphate + diphosphate. It carries out the reaction isopentenyl diphosphate + (2E)-geranyl diphosphate = (2E,6E)-farnesyl diphosphate + diphosphate. Its pathway is isoprenoid biosynthesis; geranyl diphosphate biosynthesis; geranyl diphosphate from dimethylallyl diphosphate and isopentenyl diphosphate: step 1/1. It participates in isoprenoid biosynthesis; farnesyl diphosphate biosynthesis; farnesyl diphosphate from geranyl diphosphate and isopentenyl diphosphate. Functionally, catalyzes the sequential condensations of isopentenyl pyrophosphate (IPP) with dimethylallyl diphosphate (DMAPP) to yield geranyl diphosphate (GPP) and with GPP to yield (2E,6E)-farnesyl diphosphate (E,E-FPP). The sequence is that of (2E,6E)-farnesyl diphosphate synthase from Mycobacterium tuberculosis (strain ATCC 25618 / H37Rv).